A 77-amino-acid chain; its full sequence is Structural DNA-binding protein p10 (77 aa).

Residues 1–12 (MPTKAGTKSTAN) show a composition bias toward polar residues. The segment at 1-38 (MPTKAGTKSTANKKTTKGPSKSGSAKGHTGKTHATALH) is disordered. Residues 17-27 (KGPSKSGSAKG) are compositionally biased toward low complexity.

It belongs to the asfivirus P10 family.

The protein resides in the virion. Its function is as follows. May play a role in genome packaging through direct interaction with viral DNA. Binds to ssDNA and dsDNA with the same apparent affinity in vitro. The chain is Structural DNA-binding protein p10 from Ornithodoros (relapsing fever ticks).